The chain runs to 100 residues: uncharacterized protein (100 aa).

Residues 40–100 (GDQMARKATS…DPTKNKSGRG (61 aa)) are disordered.

This is an uncharacterized protein from Mycobacterium tuberculosis (strain ATCC 25618 / H37Rv).